Consider the following 551-residue polypeptide: Glucose-6-phosphate isomerase 2 (551 aa).

The Proton donor role is filled by E353. Catalysis depends on residues H384 and K512.

It belongs to the GPI family.

It localises to the cytoplasm. The enzyme catalyses alpha-D-glucose 6-phosphate = beta-D-fructose 6-phosphate. Its pathway is carbohydrate biosynthesis; gluconeogenesis. It participates in carbohydrate degradation; glycolysis; D-glyceraldehyde 3-phosphate and glycerone phosphate from D-glucose: step 2/4. Its function is as follows. Catalyzes the reversible isomerization of glucose-6-phosphate to fructose-6-phosphate. The sequence is that of Glucose-6-phosphate isomerase 2 from Colwellia psychrerythraea (strain 34H / ATCC BAA-681) (Vibrio psychroerythus).